A 389-amino-acid chain; its full sequence is Alpha-2B adrenergic receptor (389 aa).

A helical transmembrane segment spans residues 1–25 (AIAAVITFLILFTIFGNALVILAVL). The Cytoplasmic segment spans residues 26–36 (TSRSLRAPQNL). A helical membrane pass occupies residues 37–62 (FLVSLAAADILVATLIIPFSLANELL). At 63–72 (GYWYFRRTWC) the chain is on the extracellular side. The cysteines at positions 72 and 151 are disulfide-linked. Residues 73–95 (EVYLALDVLFCTSSIVHLCAISL) form a helical membrane-spanning segment. Topologically, residues 96–117 (DRYWAVTRALEYNTKRTPRRIK) are cytoplasmic. A helical transmembrane segment spans residues 118 to 140 (CIILTVWLIAAVISLPPLIYKGD). Topologically, residues 141–156 (QGPQPRGRPQCKLNQE) are extracellular. A helical membrane pass occupies residues 157-180 (AWYILASSIGSFFAPCLIMILVYL). The Cytoplasmic segment spans residues 181 to 363 (RIYLIAKRSH…LTREKRFTFV (183 aa)). Disordered regions lie at residues 194–216 (PRAK…AGAS) and 233–320 (EANG…PLQQ). The span at 196–205 (AKGGPGGGGS) shows a compositional bias: gly residues. Low complexity predominate over residues 255-267 (PALPSSWPALPSS). The segment covering 280 to 302 (LEEEAEEEEEEEEEEEEGEEECE) has biased composition (acidic residues). Over residues 303–320 (PQALPASPASACSPPLQQ) the composition is skewed to low complexity. A helical transmembrane segment spans residues 364 to 387 (LAVVIGVFVLCWFPFFFSYSLGAI). Topologically, residues 388–389 (CP) are extracellular.

Belongs to the G-protein coupled receptor 1 family. Adrenergic receptor subfamily. ADRA2B sub-subfamily. Interacts with RAB26. Interacts with PPP1R9B. Interacts with GGA1, GGA2 and GGA3.

The protein resides in the cell membrane. In terms of biological role, alpha-2 adrenergic receptors mediate the catecholamine-induced inhibition of adenylate cyclase through the action of G proteins. The chain is Alpha-2B adrenergic receptor (ADRA2B) from Equus caballus (Horse).